A 461-amino-acid polypeptide reads, in one-letter code: Photosystem II CP43 reaction center protein (461 aa).

Residues 1-2 (ME) constitute a propeptide that is removed on maturation. Threonine 3 carries the N-acetylthreonine modification. Residue threonine 3 is modified to Phosphothreonine. The next 5 membrane-spanning stretches (helical) occupy residues 57 to 81 (LFEVAHFVPEKPMYEQGLILLPHLA), 122 to 143 (LLGPETLEESFPFFGYVWKDRN), 166 to 188 (KALYFGGVYDTWAPGGGDVRKIT), 243 to 263 (KPFAWARRALVWSGEAYLSYS), and 279 to 300 (WFNNTAYPSEFYGPTGPEASQA). Residue glutamate 355 coordinates [CaMn4O5] cluster. The chain crosses the membrane as a helical span at residues 435–459 (RARAAAAGFEKGIDRDFEPVLSMTP).

Belongs to the PsbB/PsbC family. PsbC subfamily. PSII is composed of 1 copy each of membrane proteins PsbA, PsbB, PsbC, PsbD, PsbE, PsbF, PsbH, PsbI, PsbJ, PsbK, PsbL, PsbM, PsbT, PsbX, PsbY, PsbZ, Psb30/Ycf12, at least 3 peripheral proteins of the oxygen-evolving complex and a large number of cofactors. It forms dimeric complexes. It depends on Binds multiple chlorophylls and provides some of the ligands for the Ca-4Mn-5O cluster of the oxygen-evolving complex. It may also provide a ligand for a Cl- that is required for oxygen evolution. PSII binds additional chlorophylls, carotenoids and specific lipids. as a cofactor.

It localises to the plastid. Its subcellular location is the chloroplast thylakoid membrane. In terms of biological role, one of the components of the core complex of photosystem II (PSII). It binds chlorophyll and helps catalyze the primary light-induced photochemical processes of PSII. PSII is a light-driven water:plastoquinone oxidoreductase, using light energy to abstract electrons from H(2)O, generating O(2) and a proton gradient subsequently used for ATP formation. This is Photosystem II CP43 reaction center protein from Nicotiana sylvestris (Wood tobacco).